The primary structure comprises 240 residues: Lactate utilization protein C (240 aa).

The protein belongs to the LutC/YkgG family.

Functionally, is involved in L-lactate degradation and allows cells to grow with lactate as the sole carbon source. The sequence is that of Lactate utilization protein C from Bacillus licheniformis (strain ATCC 14580 / DSM 13 / JCM 2505 / CCUG 7422 / NBRC 12200 / NCIMB 9375 / NCTC 10341 / NRRL NRS-1264 / Gibson 46).